Here is a 307-residue protein sequence, read N- to C-terminus: Pyridoxal 5'-phosphate synthase subunit PdxS (307 aa).

A compositionally biased stretch (basic residues) spans 1 to 10 (MRGQPRPKLR). The segment at 1–20 (MRGQPRPKLRRMTEQQTGTP) is disordered. Residue aspartate 37 coordinates D-ribose 5-phosphate. The Schiff-base intermediate with D-ribose 5-phosphate role is filled by lysine 94. Glycine 166 lines the D-ribose 5-phosphate pocket. Residue arginine 178 coordinates D-glyceraldehyde 3-phosphate. Residues glycine 227 and 248 to 249 (GS) contribute to the D-ribose 5-phosphate site.

Belongs to the PdxS/SNZ family. In terms of assembly, in the presence of PdxT, forms a dodecamer of heterodimers.

The catalysed reaction is aldehydo-D-ribose 5-phosphate + D-glyceraldehyde 3-phosphate + L-glutamine = pyridoxal 5'-phosphate + L-glutamate + phosphate + 3 H2O + H(+). It functions in the pathway cofactor biosynthesis; pyridoxal 5'-phosphate biosynthesis. Functionally, catalyzes the formation of pyridoxal 5'-phosphate from ribose 5-phosphate (RBP), glyceraldehyde 3-phosphate (G3P) and ammonia. The ammonia is provided by the PdxT subunit. Can also use ribulose 5-phosphate and dihydroxyacetone phosphate as substrates, resulting from enzyme-catalyzed isomerization of RBP and G3P, respectively. This Deinococcus radiodurans (strain ATCC 13939 / DSM 20539 / JCM 16871 / CCUG 27074 / LMG 4051 / NBRC 15346 / NCIMB 9279 / VKM B-1422 / R1) protein is Pyridoxal 5'-phosphate synthase subunit PdxS.